The chain runs to 617 residues: DNA mismatch repair protein MutL (617 aa).

Belongs to the DNA mismatch repair MutL/HexB family.

This protein is involved in the repair of mismatches in DNA. It is required for dam-dependent methyl-directed DNA mismatch repair. May act as a 'molecular matchmaker', a protein that promotes the formation of a stable complex between two or more DNA-binding proteins in an ATP-dependent manner without itself being part of a final effector complex. The chain is DNA mismatch repair protein MutL from Christiangramia forsetii (strain DSM 17595 / CGMCC 1.15422 / KT0803) (Gramella forsetii).